The chain runs to 513 residues: PPE family protein PPE4 (513 aa).

The next 3 helical transmembrane spans lie at 233 to 253 (IIIAFLTNPIQALITYGPLLF), 277 to 297 (FLLPAGLGLGLAAIAFLPIVL), and 309 to 329 (LAAAAVAAGSVWPAVSMAVTG). Disordered stretches follow at residues 395 to 446 (AAAA…ERGA) and 469 to 513 (LAGD…HDSK).

It belongs to the mycobacterial PPE family.

The protein resides in the cell membrane. In terms of biological role, important for the siderophore-mediated iron-acquisition function of ESX-3. This chain is PPE family protein PPE4 (PPE4), found in Mycobacterium tuberculosis (strain CDC 1551 / Oshkosh).